The following is a 182-amino-acid chain: UPF0200 protein Mthe_1012 (182 aa).

Residue 8–15 participates in ATP binding; that stretch reads GMPGSGKS.

This sequence belongs to the UPF0200 family.

This is UPF0200 protein Mthe_1012 from Methanothrix thermoacetophila (strain DSM 6194 / JCM 14653 / NBRC 101360 / PT) (Methanosaeta thermophila).